The sequence spans 252 residues: MDKLLIVNADDFGLSKGQNYGIVEACRHGVVASTTAMVNGEAVEHAAALSRELPGLGVGMHFVLTLGMPLSPMPGLTRSGQLGKWIWQMAEQGTLPLDEIARELDCQFNRFVDLFGREPTHIDSHHHVHMIPAIFPLVAQFAARKGVAMRVDRQVQASHDLTLSRAPTTQGYSSDFYGDEISETLFLQVLDASAARGEQSFEMMAHPAFVDNTVRKSAYCWSRLAELDVLTSPSLKYAIAERGYRLGSFLDL.

2 residues coordinate Mg(2+): histidine 61 and histidine 125.

Belongs to the YdjC deacetylase family. ChbG subfamily. In terms of assembly, homodimer. It depends on Mg(2+) as a cofactor.

Its subcellular location is the cytoplasm. It carries out the reaction N,N'-diacetylchitobiose + H2O = N-acetyl-beta-D-glucosaminyl-(1-&gt;4)-D-glucosamine + acetate. It catalyses the reaction diacetylchitobiose-6'-phosphate + H2O = N'-monoacetylchitobiose-6'-phosphate + acetate. It functions in the pathway glycan degradation; chitin degradation. Involved in the degradation of chitin. ChbG is essential for growth on the acetylated chitooligosaccharides chitobiose and chitotriose but is dispensable for growth on cellobiose and chitosan dimer, the deacetylated form of chitobiose. Deacetylation of chitobiose-6-P and chitotriose-6-P is necessary for both the activation of the chb promoter by the regulatory protein ChbR and the hydrolysis of phosphorylated beta-glucosides by the phospho-beta-glucosidase ChbF. Catalyzes the removal of only one acetyl group from chitobiose-6-P to yield monoacetylchitobiose-6-P, the inducer of ChbR and the substrate of ChbF. This Enterobacter sp. (strain 638) protein is Chitooligosaccharide deacetylase.